We begin with the raw amino-acid sequence, 289 residues long: Thymidylate synthase (289 aa).

DUMP is bound by residues arginine 26 and 151–152 (RR). Catalysis depends on cysteine 171, which acts as the Nucleophile. Residues 191–194 (RSGD), asparagine 202, and 232–234 (HVY) contribute to the dUMP site. Aspartate 194 contributes to the (6R)-5,10-methylene-5,6,7,8-tetrahydrofolate binding site. Residue alanine 288 participates in (6R)-5,10-methylene-5,6,7,8-tetrahydrofolate binding.

Belongs to the thymidylate synthase family. As to quaternary structure, homodimer.

It catalyses the reaction dUMP + (6R)-5,10-methylene-5,6,7,8-tetrahydrofolate = 7,8-dihydrofolate + dTMP. The protein operates within pyrimidine metabolism; dTTP biosynthesis. The polypeptide is Thymidylate synthase (Equus caballus (Horse)).